The chain runs to 244 residues: MSAAAYMDFVAAQCLVSISNRAAVPEHGGAPDAERLRLPEREVTKEHGDPGDTWKDYCTLVTIAKSLLDLNKYRPIQTPSVCSDSLESPDEDIGSDSDVTTESGSSPSHSPEERQDSGSAPSPLSLLHSGVASKGKHASEKRHKCPYSGCGKVYGKSSHLKAHYRVHTGERPFPCTWPDCLKKFSRSDELTRHYRTHTGEKQFRCPLCEKRFMRSDHLTKHARRHTDFHPSMIKRSKKALASPL.

2 disordered regions span residues 24–51 (VPEH…GDPG) and 79–143 (PSVC…EKRH). The span at 32-51 (DAERLRLPEREVTKEHGDPG) shows a compositional bias: basic and acidic residues. Phosphoserine is present on serine 122. A compositionally biased stretch (basic residues) spans 134 to 143 (KGKHASEKRH). 3 C2H2-type zinc fingers span residues 143–167 (HKCP…YRVH), 173–197 (FPCT…YRTH), and 203–225 (FRCP…ARRH).

It belongs to the Sp1 C2H2-type zinc-finger protein family. In terms of assembly, interacts with ZZEF1.

It localises to the nucleus. In terms of biological role, transcription factor that binds to GC box promoter elements. Selectively activates mRNA synthesis from genes containing tandem repeats of GC boxes but represses genes with a single GC box. Acts as an epidermal circadian transcription factor regulating keratinocyte proliferation. In Rattus norvegicus (Rat), this protein is Krueppel-like factor 9 (Klf9).